The primary structure comprises 448 residues: Adenylosuccinate synthetase (448 aa).

Residues 22–28 and 50–52 contribute to the GTP site; these read GDEGKGK and GHT. Catalysis depends on D23, which acts as the Proton acceptor. Positions 23 and 50 each coordinate Mg(2+). IMP is bound by residues 23 to 26, 48 to 51, T139, R153, Q234, T249, and R321; these read DEGK and NAGH. The active-site Proton donor is H51. Residue 317–323 participates in substrate binding; that stretch reads SVTGRPR. GTP is bound by residues R323, 349–351, and 431–433; these read KLD and STG.

This sequence belongs to the adenylosuccinate synthetase family. Homodimer. The cofactor is Mg(2+).

The protein resides in the cytoplasm. The enzyme catalyses IMP + L-aspartate + GTP = N(6)-(1,2-dicarboxyethyl)-AMP + GDP + phosphate + 2 H(+). It functions in the pathway purine metabolism; AMP biosynthesis via de novo pathway; AMP from IMP: step 1/2. Functionally, plays an important role in the de novo pathway of purine nucleotide biosynthesis. Catalyzes the first committed step in the biosynthesis of AMP from IMP. This is Adenylosuccinate synthetase from Paraburkholderia xenovorans (strain LB400).